The following is a 226-amino-acid chain: Cytidylate kinase (226 aa).

Position 14–22 (14–22 (GPAGAGKST)) interacts with ATP.

Belongs to the cytidylate kinase family. Type 1 subfamily.

It localises to the cytoplasm. The catalysed reaction is CMP + ATP = CDP + ADP. It catalyses the reaction dCMP + ATP = dCDP + ADP. This is Cytidylate kinase from Symbiobacterium thermophilum (strain DSM 24528 / JCM 14929 / IAM 14863 / T).